Here is a 406-residue protein sequence, read N- to C-terminus: Eukaryotic initiation factor 4A-I (406 aa).

The tract at residues 1-21 (MSASQDSRSRDNGPDGMEPEG) is disordered. S2 is modified (N-acetylserine). At S4 the chain carries Phosphoserine. A Q motif motif is present at residues 32 to 60 (DSLDDMNLSESLLRGIYAYGFEKPSAIQQ). The 172-residue stretch at 63 to 234 (ILSCIKGYDV…KKFMRDPIRI (172 aa)) folds into the Helicase ATP-binding domain. Residue 76–83 (AQSGTGKT) participates in ATP binding. K118 is subject to N6-acetyllysine. K146 participates in a covalent cross-link: Glycyl lysine isopeptide (Lys-Gly) (interchain with G-Cter in SUMO2). T158 is subject to Phosphothreonine. K174 bears the N6-acetyllysine mark. The DEAD box motif lies at 182-185 (DEAD). At K193 the chain carries N6-acetyllysine. A Glycyl lysine isopeptide (Lys-Gly) (interchain with G-Cter in SUMO2) cross-link involves residue K225. At K238 the chain carries N6-acetyllysine; alternate. K238 is covalently cross-linked (Glycyl lysine isopeptide (Lys-Gly) (interchain with G-Cter in SUMO2); alternate). The Helicase C-terminal domain occupies 245–406 (GIRQFYINVE…EMPLNVADLI (162 aa)). Glycyl lysine isopeptide (Lys-Gly) (interchain with G-Cter in SUMO2) cross-links involve residues K309, K369, and K381.

The protein belongs to the DEAD box helicase family. eIF4A subfamily. As to quaternary structure, eIF4F is a multi-subunit complex, the composition of which varies with external and internal environmental conditions. It is composed of at least EIF4A, EIF4E and EIF4G1/EIF4G3. Interacts with PAIP1, EIF4E and UPF2. Found in a complex with XPO7, EIF4A1, ARHGAP1, VPS26A, VPS29, VPS35 and SFN. May interact with NOM1. Interacts with PDCD4; this interferes with the interaction between EIF4A and EIF4G. Interacts with RBM4. Interacts with DDX3X in an RNA-independent manner. Interacts with PKP1 (via N-terminus); the interaction promotes EIF4A1 recruitment to the cap-dependent translation complex and EIF4A1 ATPase activity.

The protein localises to the cytoplasm. It localises to the perinuclear region. Its subcellular location is the cell membrane. It is found in the stress granule. It catalyses the reaction ATP + H2O = ADP + phosphate + H(+). ATP-dependent RNA helicase which is a subunit of the eIF4F complex involved in cap recognition and is required for mRNA binding to ribosome. In the current model of translation initiation, eIF4A unwinds RNA secondary structures in the 5'-UTR of mRNAs which is necessary to allow efficient binding of the small ribosomal subunit, and subsequent scanning for the initiator codon. As a result, promotes cell proliferation and growth. This Pongo abelii (Sumatran orangutan) protein is Eukaryotic initiation factor 4A-I (EIF4A1).